A 161-amino-acid chain; its full sequence is Nucleotide-binding protein Bamb_2603 (161 aa).

Belongs to the YajQ family.

Nucleotide-binding protein. The protein is Nucleotide-binding protein Bamb_2603 of Burkholderia ambifaria (strain ATCC BAA-244 / DSM 16087 / CCUG 44356 / LMG 19182 / AMMD) (Burkholderia cepacia (strain AMMD)).